The sequence spans 229 residues: Probable GTP-binding protein EngB (229 aa).

The EngB-type G domain maps to 53-228 (DLPEVAFAGR…RAEIVRLCID (176 aa)). Residues 61–68 (GRSNVGKS), 88–92 (GRTRE), 106–109 (DLPG), 173–176 (TKAD), and 207–209 (TSS) contribute to the GTP site. Mg(2+)-binding residues include Ser68 and Thr90.

The protein belongs to the TRAFAC class TrmE-Era-EngA-EngB-Septin-like GTPase superfamily. EngB GTPase family. Mg(2+) is required as a cofactor.

Functionally, necessary for normal cell division and for the maintenance of normal septation. The polypeptide is Probable GTP-binding protein EngB (Caulobacter vibrioides (strain NA1000 / CB15N) (Caulobacter crescentus)).